The following is a 700-amino-acid chain: Long-chain-fatty-acid--CoA ligase 1 (700 aa).

The disordered stretch occupies residues 1 to 21 (MVAQYTVPVGKAANEHETAPR). Lys-189 is covalently cross-linked (Glycyl lysine isopeptide (Lys-Gly) (interchain with G-Cter in ubiquitin)). 269–280 (YTSGSTGEPKGV) is an ATP binding site. The FACS signature appears at 531-580 (DGWFKTGDIGEWEANGHLKIIDRKKNLVKTMNGEYIALEKLESVYRSNEY).

This sequence belongs to the ATP-dependent AMP-binding enzyme family. Interacts with FAT1. Requires Mg(2+) as cofactor.

Its subcellular location is the lipid droplet. It localises to the cell membrane. The catalysed reaction is a long-chain fatty acid + ATP + CoA = a long-chain fatty acyl-CoA + AMP + diphosphate. The enzyme catalyses (9Z)-octadecenoate + ATP + CoA = (9Z)-octadecenoyl-CoA + AMP + diphosphate. It catalyses the reaction hexadecanoate + ATP + CoA = hexadecanoyl-CoA + AMP + diphosphate. It carries out the reaction (9Z)-hexadecenoate + ATP + CoA = (9Z)-hexadecenoyl-CoA + AMP + diphosphate. The catalysed reaction is tetradecanoate + ATP + CoA = tetradecanoyl-CoA + AMP + diphosphate. The enzyme catalyses (9Z)-tetradecenoate + ATP + CoA = (9Z)-tetradecenoyl-CoA + AMP + diphosphate. It catalyses the reaction (9Z,12Z)-octadecadienoate + ATP + CoA = (9Z,12Z)-octadecadienoyl-CoA + AMP + diphosphate. It carries out the reaction dodecanoate + ATP + CoA = dodecanoyl-CoA + AMP + diphosphate. The catalysed reaction is pentadecanoate + ATP + CoA = pentadecanoyl-CoA + AMP + diphosphate. The enzyme catalyses undecanoate + ATP + CoA = undecanoyl-CoA + AMP + diphosphate. It catalyses the reaction heptadecanoate + ATP + CoA = heptadecanoyl-CoA + AMP + diphosphate. It carries out the reaction octadecanoate + ATP + CoA = octadecanoyl-CoA + AMP + diphosphate. Activates long-chain fatty acids (LCFA) by esterification of the fatty acids into metabolically active CoA-thioesters for subsequent degradation or incorporation into phospholipids. Also facilitates the transport of LCFAs into the cell, either by active transport or by decreasing the intracellular LCFA concentration. It may supplement intracellular myristoyl-CoA pools from exogenous myristate. Preferentially acts on C12:0-C16:0 fatty acids with myristic and pentadecanic acid (C15:0) having the highest activities. Also involved in long-chain base (LCB) uptake of sphingolipids. In contrast ot LCFA uptake, LCB uptake does not require ATP, suggesting that the enzyme is directly involved in active LCB uptake. Involved in the sphingolipid-to-glycerolipid metabolic pathway, converting the sphingolipid metabolite hexadecenoic acid to hexadecenoyl-CoA, which is then further converted to glycerolipids. The polypeptide is Long-chain-fatty-acid--CoA ligase 1 (FAA1) (Saccharomyces cerevisiae (strain ATCC 204508 / S288c) (Baker's yeast)).